A 387-amino-acid chain; its full sequence is Ubiquitin-conjugating enzyme E2 25 (387 aa).

A disordered region spans residues 117 to 164 (APPVRDDIDEGRGSDISDTTSEPIDDDMAGDGEVDDDDEEEEDDEDAD). Residues 120–131 (VRDDIDEGRGSD) show a composition bias toward basic and acidic residues. Residues 139–164 (PIDDDMAGDGEVDDDDEEEEDDEDAD) show a composition bias toward acidic residues. A UBC core domain is found at 214–380 (TATDRLMKEI…QQIHAKSGWY (167 aa)). Catalysis depends on Cys-315, which acts as the Glycyl thioester intermediate.

This sequence belongs to the ubiquitin-conjugating enzyme family. As to expression, in the embryo, expressed in precursor neuron and muscle cells and in other cells such as hypodermal cells. After hatching of L1 larvae and in all subsequent stages, strongest expression in pharyngeal muscle and anal muscle cells. In L4 larvae and adolescent hermaphrodites, also expressed in the vulval muscles. Expression also detected in all four nerve cords and in neurons with weaker levels in all body wall muscles.

Its subcellular location is the cytoplasm. The protein resides in the nucleus. It carries out the reaction S-ubiquitinyl-[E1 ubiquitin-activating enzyme]-L-cysteine + [E2 ubiquitin-conjugating enzyme]-L-cysteine = [E1 ubiquitin-activating enzyme]-L-cysteine + S-ubiquitinyl-[E2 ubiquitin-conjugating enzyme]-L-cysteine.. Its pathway is protein modification; protein ubiquitination. Functionally, catalyzes the covalent attachment of ubiquitin to other proteins (Potential). Required for the maintenance of neuromuscular function. This is Ubiquitin-conjugating enzyme E2 25 from Caenorhabditis elegans.